Reading from the N-terminus, the 364-residue chain is Phosphoserine aminotransferase (364 aa).

R41 is a binding site for L-glutamate. Pyridoxal 5'-phosphate-binding positions include 75 to 76 (AS), W100, T155, and Q198. K199 carries the N6-(pyridoxal phosphate)lysine modification. Residue 239–240 (NT) coordinates pyridoxal 5'-phosphate.

This sequence belongs to the class-V pyridoxal-phosphate-dependent aminotransferase family. SerC subfamily. In terms of assembly, homodimer. It depends on pyridoxal 5'-phosphate as a cofactor.

It is found in the cytoplasm. It catalyses the reaction O-phospho-L-serine + 2-oxoglutarate = 3-phosphooxypyruvate + L-glutamate. It carries out the reaction 4-(phosphooxy)-L-threonine + 2-oxoglutarate = (R)-3-hydroxy-2-oxo-4-phosphooxybutanoate + L-glutamate. Its pathway is amino-acid biosynthesis; L-serine biosynthesis; L-serine from 3-phospho-D-glycerate: step 2/3. In terms of biological role, catalyzes the reversible conversion of 3-phosphohydroxypyruvate to phosphoserine and of 3-hydroxy-2-oxo-4-phosphonooxybutanoate to phosphohydroxythreonine. This Streptococcus thermophilus (strain ATCC BAA-250 / LMG 18311) protein is Phosphoserine aminotransferase.